The primary structure comprises 492 residues: SH2 domain-containing adapter protein E (492 aa).

Disordered regions lie at residues 46–193 (TASE…DKAK), 214–236 (KRTK…EPYD), 260–332 (LDGP…EQPW), and 347–384 (FEGS…KVDP). Ser-103 carries the post-translational modification Phosphoserine. Over residues 149-158 (IKVDTQEKNG) the composition is skewed to basic and acidic residues. Residues 168-184 (TSSSSSSSSSASSSPSS) show a composition bias toward low complexity. 5 stretches are compositionally biased toward basic and acidic residues: residues 214 to 227 (KRTK…RVGE), 268 to 285 (ETVK…KDLL), 306 to 332 (AEVK…EQPW), 349 to 361 (GSDR…DAGR), and 373 to 383 (LSDHGDGEKVD). The SH2 domain maps to 393-488 (WYHGSISRAE…AEHMTLLHPV (96 aa)).

In terms of tissue distribution, expressed in heart, brain, lung and skeletal muscle.

The polypeptide is SH2 domain-containing adapter protein E (She) (Mus musculus (Mouse)).